We begin with the raw amino-acid sequence, 101 residues long: Small ribosomal subunit protein uS14 (101 aa).

Belongs to the universal ribosomal protein uS14 family. As to quaternary structure, part of the 30S ribosomal subunit. Contacts proteins S3 and S10.

Functionally, binds 16S rRNA, required for the assembly of 30S particles and may also be responsible for determining the conformation of the 16S rRNA at the A site. The protein is Small ribosomal subunit protein uS14 of Chromobacterium violaceum (strain ATCC 12472 / DSM 30191 / JCM 1249 / CCUG 213 / NBRC 12614 / NCIMB 9131 / NCTC 9757 / MK).